We begin with the raw amino-acid sequence, 295 residues long: 4-hydroxy-tetrahydrodipicolinate synthase (295 aa).

Residue Thr-47 coordinates pyruvate. Tyr-135 acts as the Proton donor/acceptor in catalysis. The active-site Schiff-base intermediate with substrate is the Lys-163. Ile-206 serves as a coordination point for pyruvate.

This sequence belongs to the DapA family. Homodimer.

The protein localises to the cytoplasm. It catalyses the reaction L-aspartate 4-semialdehyde + pyruvate = (2S,4S)-4-hydroxy-2,3,4,5-tetrahydrodipicolinate + H2O + H(+). The protein operates within amino-acid biosynthesis; L-lysine biosynthesis via DAP pathway; (S)-tetrahydrodipicolinate from L-aspartate: step 3/4. Catalyzes the condensation of (S)-aspartate-beta-semialdehyde [(S)-ASA] and pyruvate to 4-hydroxy-tetrahydrodipicolinate (HTPA). This chain is 4-hydroxy-tetrahydrodipicolinate synthase, found in Staphylococcus aureus (strain bovine RF122 / ET3-1).